Consider the following 115-residue polypeptide: Large ribosomal subunit protein bL20c (115 aa).

The protein belongs to the bacterial ribosomal protein bL20 family.

Its subcellular location is the plastid. It localises to the chloroplast. Its function is as follows. Binds directly to 23S ribosomal RNA and is necessary for the in vitro assembly process of the 50S ribosomal subunit. It is not involved in the protein synthesizing functions of that subunit. This is Large ribosomal subunit protein bL20c from Pleurastrum terricola (Filamentous green alga).